The sequence spans 323 residues: Methionyl-tRNA formyltransferase (323 aa).

113 to 116 (SLLP) is a (6S)-5,6,7,8-tetrahydrofolate binding site.

This sequence belongs to the Fmt family.

It carries out the reaction L-methionyl-tRNA(fMet) + (6R)-10-formyltetrahydrofolate = N-formyl-L-methionyl-tRNA(fMet) + (6S)-5,6,7,8-tetrahydrofolate + H(+). In terms of biological role, attaches a formyl group to the free amino group of methionyl-tRNA(fMet). The formyl group appears to play a dual role in the initiator identity of N-formylmethionyl-tRNA by promoting its recognition by IF2 and preventing the misappropriation of this tRNA by the elongation apparatus. This Porphyromonas gingivalis (strain ATCC BAA-308 / W83) protein is Methionyl-tRNA formyltransferase.